We begin with the raw amino-acid sequence, 671 residues long: DNA ligase (671 aa).

Residues aspartate 34–aspartate 38, serine 83–leucine 84, and glutamate 113 contribute to the NAD(+) site. The active-site N6-AMP-lysine intermediate is the lysine 115. NAD(+) is bound by residues arginine 136, glutamate 170, lysine 286, and lysine 310. Residues cysteine 404, cysteine 407, cysteine 422, and cysteine 427 each coordinate Zn(2+). The BRCT domain maps to glutamate 590–glutamine 671.

Belongs to the NAD-dependent DNA ligase family. LigA subfamily. Mg(2+) is required as a cofactor. The cofactor is Mn(2+).

The enzyme catalyses NAD(+) + (deoxyribonucleotide)n-3'-hydroxyl + 5'-phospho-(deoxyribonucleotide)m = (deoxyribonucleotide)n+m + AMP + beta-nicotinamide D-nucleotide.. Its function is as follows. DNA ligase that catalyzes the formation of phosphodiester linkages between 5'-phosphoryl and 3'-hydroxyl groups in double-stranded DNA using NAD as a coenzyme and as the energy source for the reaction. It is essential for DNA replication and repair of damaged DNA. The chain is DNA ligase from Shouchella clausii (strain KSM-K16) (Alkalihalobacillus clausii).